We begin with the raw amino-acid sequence, 895 residues long: Probable LRR receptor-like serine/threonine-protein kinase At5g48740 (895 aa).

An N-terminal signal peptide occupies residues 1 to 16; it reads MLFWVLLSSFCVFCFS. At 17–544 the chain is on the extracellular side; that stretch reads SPDGFLSLSC…INKKQRKQNR (528 aa). 7 N-linked (GlcNAc...) asparagine glycosylation sites follow: Asn36, Asn50, Asn60, Asn140, Asn195, Asn234, and Asn318. LRR repeat units lie at residues 385 to 407, 408 to 430, 431 to 453, 454 to 477, 478 to 500, and 511 to 532; these read RVTS…GDLL, DLKT…GSLK, DLQK…EDLV, NLEV…GKLK, KLRL…LNIT, and CLSF…PQVT. N-linked (GlcNAc...) asparagine glycosylation is found at Asn416, Asn436, Asn462, Asn498, and Asn521. A helical transmembrane segment spans residues 545–565; it reads IAILLGVSGGALFATFLVFVF. At 566–895 the chain is on the cytoplasmic side; the sequence is MSIFTRRQRN…SYLAASAHTD (330 aa). Residues 606–888 form the Protein kinase domain; it reads RNFKEVIGRG…EAYSLQLSYL (283 aa). ATP-binding positions include 612–620 and Lys634; that span reads IGRGSFGAV. Position 679 is a phosphotyrosine (Tyr679). Asp732 functions as the Proton acceptor in the catalytic mechanism. Ser736 bears the Phosphoserine mark. Phosphothreonine is present on residues Thr767 and Thr772. The residue at position 780 (Tyr780) is a Phosphotyrosine.

Belongs to the protein kinase superfamily. Ser/Thr protein kinase family.

The protein resides in the membrane. The enzyme catalyses L-seryl-[protein] + ATP = O-phospho-L-seryl-[protein] + ADP + H(+). It catalyses the reaction L-threonyl-[protein] + ATP = O-phospho-L-threonyl-[protein] + ADP + H(+). The sequence is that of Probable LRR receptor-like serine/threonine-protein kinase At5g48740 from Arabidopsis thaliana (Mouse-ear cress).